The sequence spans 102 residues: Inner membrane protein YaiY (102 aa).

At 1–24 (MADFTLSKSLFSGKYRNASSTPGN) the chain is on the cytoplasmic side. A helical membrane pass occupies residues 25 to 45 (IAYALFVLFCFWAGAQLLNLL). Over 46–74 (VHAPGVYERLMQVQETGRPRVEIGLGVGT) the chain is Periplasmic. The helical transmembrane segment at 75–95 (IFGLIPFLVGCLIFAVVALWL) threads the bilayer. Residues 96–102 (HWRHRRQ) lie on the Cytoplasmic side of the membrane.

Its subcellular location is the cell inner membrane. This Escherichia coli O157:H7 protein is Inner membrane protein YaiY (yaiY).